The primary structure comprises 647 residues: Pumilio homolog 3 (647 aa).

Over residues 1 to 10 (MEVKGKKKIT) the composition is skewed to basic residues. Positions 1–123 (MEVKGKKKIT…KKKKELKQNR (123 aa)) are disordered. Position 33 is an N6-acetyllysine (Lys33). Basic residues predominate over residues 59-68 (PGKKRVKQFK). Residues 93 to 123 (FQPDGKSDESAAKKPKWDDFKKKKKELKQNR) show a composition bias toward basic and acidic residues. Positions 105-117 (KKPKWDDFKKKKK) match the Nuclear localization signal motif. Residues 142 to 509 (ESLRRKDCDK…VVLDKSVCVL (368 aa)) enclose the PUM-HD domain. Pumilio repeat units follow at residues 176-211 (HDSTRVIQCLIQYGSEEQRKWAFEELQGDLVELSKA), 212-247 (KYSRNIVKKFLMYGSKPQIAEIIRSFKGHVRKMLRH), 248-276 (SEASAIVEYAYNDKAILEQRNMLTEELYG), 288-324 (PTLEKVLEVQPGKLELILDEMKQILTPMAQKEAVIKH), 325-360 (SLVHKVFLDFFTYAPPKLRSELIEAIREAVVYLAHT), 361-396 (HDGARVAMHCLWHGTPKDRKVIVKTMKTYVEKIANG), 397-434 (QYSHLVLLAAFDCIDDTKLVKQIIISEVISSLPSIVND), 435-503 (KYGR…VVLD), 504-550 (KSVC…IAEH), 551-595 (PAGH…WASI), and 596-635 (NRGAIVLSSLLQSCDQDVVNKVKAGLKTLIPTLEKTKSTS).

Interacts with PARP1 (via catalytic domain).

It is found in the nucleus. The protein resides in the nucleolus. The protein localises to the nucleoplasm. Its subcellular location is the chromosome. Inhibits the poly(ADP-ribosyl)ation activity of PARP1 and the degradation of PARP1 by CASP3 following genotoxic stress. Binds to double-stranded RNA or DNA without sequence specificity. Involved in development of the eye and of primordial germ cells. This Rattus norvegicus (Rat) protein is Pumilio homolog 3.